Reading from the N-terminus, the 513-residue chain is Cyclin-dependent kinase C-2 (513 aa).

The 300-residue stretch at 26–325 (FEKLEQIGEG…AKDALDAEYF (300 aa)) folds into the Protein kinase domain. Residues 32–40 (IGEGTYGQV) and Lys-55 each bind ATP. Tyr-37 is modified (phosphotyrosine). The active-site Proton acceptor is Asp-164. Thr-198 carries the phosphothreonine modification. Residues 337-513 (LPTYESSHEF…ARNQQYGWQP (177 aa)) are disordered. Residues 395–404 (AGPNHPMNNN) are compositionally biased toward low complexity. Residues 434 to 448 (SGNQTGGYNNQSRGG) are compositionally biased toward polar residues. Gly residues-rich tracts occupy residues 461 to 476 (APYG…GYGV) and 483 to 496 (QGGG…GSGR).

The protein belongs to the protein kinase superfamily. CMGC Ser/Thr protein kinase family. CDC2/CDKX subfamily. In terms of assembly, interacts with CYCT1-3. Highly expressed in flowers. Expressed in seedlings, roots, rosettes and stems.

The enzyme catalyses L-seryl-[protein] + ATP = O-phospho-L-seryl-[protein] + ADP + H(+). The catalysed reaction is L-threonyl-[protein] + ATP = O-phospho-L-threonyl-[protein] + ADP + H(+). It carries out the reaction [DNA-directed RNA polymerase] + ATP = phospho-[DNA-directed RNA polymerase] + ADP + H(+). The chain is Cyclin-dependent kinase C-2 (CDKC-2) from Arabidopsis thaliana (Mouse-ear cress).